A 156-amino-acid polypeptide reads, in one-letter code: ATP synthase subunit b (156 aa).

Residues 7-29 (LFGQTVAFILFVWFCMKFVWPPL) form a helical membrane-spanning segment.

Belongs to the ATPase B chain family. F-type ATPases have 2 components, F(1) - the catalytic core - and F(0) - the membrane proton channel. F(1) has five subunits: alpha(3), beta(3), gamma(1), delta(1), epsilon(1). F(0) has three main subunits: a(1), b(2) and c(10-14). The alpha and beta chains form an alternating ring which encloses part of the gamma chain. F(1) is attached to F(0) by a central stalk formed by the gamma and epsilon chains, while a peripheral stalk is formed by the delta and b chains.

It localises to the cell inner membrane. F(1)F(0) ATP synthase produces ATP from ADP in the presence of a proton or sodium gradient. F-type ATPases consist of two structural domains, F(1) containing the extramembraneous catalytic core and F(0) containing the membrane proton channel, linked together by a central stalk and a peripheral stalk. During catalysis, ATP synthesis in the catalytic domain of F(1) is coupled via a rotary mechanism of the central stalk subunits to proton translocation. Functionally, component of the F(0) channel, it forms part of the peripheral stalk, linking F(1) to F(0). In Shewanella frigidimarina (strain NCIMB 400), this protein is ATP synthase subunit b.